The sequence spans 512 residues: Respiratory nitrate reductase 1 beta chain (512 aa).

3 consecutive 4Fe-4S ferredoxin-type domains span residues 7 to 35 (VGMVLNLDKCIGCHTCSVTCKNVWTSREG), 175 to 206 (TFMMYLPRLCEHCLNPACVATCPSGAIYKREE), and 208 to 237 (GIVLIDQDKCRGWRMCITGCPYKKIYFNWK). [4Fe-4S] cluster contacts are provided by Cys16, Cys19, Cys22, Cys26, Cys184, Cys187, and Cys192. Residues Cys196, Cys217, and Cys223 each coordinate [3Fe-4S] cluster. Residues Cys227, Cys244, Cys247, Cys259, and Cys263 each coordinate [4Fe-4S] cluster.

As to quaternary structure, dimer of heterotrimers each composed of an alpha, a beta and a gamma chain. Alpha and beta are catalytic chains; gamma chains are involved in binding the enzyme complex to the cytoplasmic membrane. The cofactor is [4Fe-4S] cluster. [3Fe-4S] cluster is required as a cofactor.

It localises to the cell membrane. The catalysed reaction is nitrate + a quinol = a quinone + nitrite + H2O. The nitrate reductase enzyme complex allows E.coli to use nitrate as an electron acceptor during anaerobic growth. The beta chain is an electron transfer unit containing four cysteine clusters involved in the formation of iron-sulfur centers. Electrons are transferred from the gamma chain to the molybdenum cofactor of the alpha subunit. The chain is Respiratory nitrate reductase 1 beta chain (narH) from Escherichia coli (strain K12).